The sequence spans 145 residues: Large ribosomal subunit protein uL16 (145 aa).

This sequence belongs to the universal ribosomal protein uL16 family. In terms of assembly, part of the 50S ribosomal subunit.

Its function is as follows. Binds 23S rRNA and is also seen to make contacts with the A and possibly P site tRNAs. The polypeptide is Large ribosomal subunit protein uL16 (Desulfitobacterium hafniense (strain DSM 10664 / DCB-2)).